The following is a 222-amino-acid chain: Putative ankyrin repeat protein L36 (222 aa).

ANK repeat units lie at residues 1 to 14 (MVKYLVAQGVNVDA), 15 to 44 (QNSRALCLACKYGYINIAYFLMHEGANIYA), 45 to 74 (NDNHPIRLAAEYGHLSIVKLLIYHNANIRA), 76 to 104 (EDSALRMAAKRNKLEVVKYIIEKIGTNYE), 105 to 134 (YSDYPLAYAAGKGHIEMIEYLLSIGEKITD), 136 to 161 (AMFMAINNGHVGTVKYLIDESQSLPC), and 163 to 191 (SYSELAKITRKGHLEMIKLLNNRGIKINK).

In Acanthamoeba polyphaga (Amoeba), this protein is Putative ankyrin repeat protein L36.